The sequence spans 119 residues: Large ribosomal subunit protein bL20 (119 aa).

This sequence belongs to the bacterial ribosomal protein bL20 family.

Binds directly to 23S ribosomal RNA and is necessary for the in vitro assembly process of the 50S ribosomal subunit. It is not involved in the protein synthesizing functions of that subunit. In Caldanaerobacter subterraneus subsp. tengcongensis (strain DSM 15242 / JCM 11007 / NBRC 100824 / MB4) (Thermoanaerobacter tengcongensis), this protein is Large ribosomal subunit protein bL20.